The chain runs to 453 residues: Ribulose bisphosphate carboxylase large chain (453 aa).

Positions 1–2 (MS) are excised as a propeptide. Residue proline 3 is modified to N-acetylproline. Lysine 14 carries the N6,N6,N6-trimethyllysine modification. Positions 123 and 173 each coordinate substrate. Lysine 175 acts as the Proton acceptor in catalysis. Lysine 177 serves as a coordination point for substrate. 3 residues coordinate Mg(2+): lysine 201, aspartate 203, and glutamate 204. Lysine 201 carries the post-translational modification N6-carboxylysine. The active-site Proton acceptor is histidine 294. Positions 295, 327, and 379 each coordinate substrate.

This sequence belongs to the RuBisCO large chain family. Type I subfamily. Heterohexadecamer of 8 large chains and 8 small chains; disulfide-linked. The disulfide link is formed within the large subunit homodimers. Requires Mg(2+) as cofactor. The disulfide bond which can form in the large chain dimeric partners within the hexadecamer appears to be associated with oxidative stress and protein turnover.

The protein resides in the plastid. The protein localises to the chloroplast. It carries out the reaction 2 (2R)-3-phosphoglycerate + 2 H(+) = D-ribulose 1,5-bisphosphate + CO2 + H2O. The catalysed reaction is D-ribulose 1,5-bisphosphate + O2 = 2-phosphoglycolate + (2R)-3-phosphoglycerate + 2 H(+). RuBisCO catalyzes two reactions: the carboxylation of D-ribulose 1,5-bisphosphate, the primary event in carbon dioxide fixation, as well as the oxidative fragmentation of the pentose substrate in the photorespiration process. Both reactions occur simultaneously and in competition at the same active site. This chain is Ribulose bisphosphate carboxylase large chain, found in Hydnophytum formicarum (Ant plant).